Consider the following 251-residue polypeptide: Elongation factor Ts (251 aa).

The interval 82-85 is involved in Mg(2+) ion dislocation from EF-Tu; it reads TDFV. Residues 215–251 form a disordered region; that stretch reads QMGQKAPEPVAAAPQVEEKAPEPAAKDNPPAKGKKKK. Residues 219–229 show a composition bias toward low complexity; sequence KAPEPVAAAPQ. Basic and acidic residues predominate over residues 230–239; the sequence is VEEKAPEPAA.

The protein belongs to the EF-Ts family.

The protein localises to the cytoplasm. Its function is as follows. Associates with the EF-Tu.GDP complex and induces the exchange of GDP to GTP. It remains bound to the aminoacyl-tRNA.EF-Tu.GTP complex up to the GTP hydrolysis stage on the ribosome. This Microcystis aeruginosa (strain NIES-843 / IAM M-2473) protein is Elongation factor Ts.